The primary structure comprises 567 residues: MPGDQLTEETIQRVFLNATSAKIEEFFSKWNFSNANSTKFGMSEAERNLLGDEISAKIDNDDLASILLETVRLISRERQGLESLLNENLCDTILKLAGITPVVGYPRSVHALMEAQKCLVNTMFHSAKMRERFYMNLVNGDQIQRFLSEFEDSRRENSNIQWIREMNPTQAAEVWYFYHRIAFIATAMDKGFQRHWADQSTTVSNILCAAEVCLQKASDDVANLDLLRANEAMKTFFNVFCHFHGDVPGLDEKNTHLACRILRDVICSGIPNDDVIQSAIHALSVPPLPMDLSVLLSDPNFPIVPLPETISEEERVHPRDYYVNMTLTEAILAALDKQLIKAVDLLNSVPFNQVSPEGNTLVDLSGPYFQALARLCVESKYARRYCRIRVLPPLVADEVKKRPEEHDSLRGRIVRVMMLPSTTKEVASEFLFIICKRSVSRMIKYVGFGHSAGHLANFGLLGQINQPKHASDSEDSETEDYNAVKDNVNPVTGAMYPPDHGSAMDGMSDAQKEFEAMKLVDAMNKLMDQGLVKPGTIGDDGKVREVSHVLELLKDAPEPDTMDSDSD.

The protein belongs to the synembryn family.

The protein resides in the cytoplasm. It localises to the cell cortex. Chaperone that specifically binds and folds some, but not all, nascent G alpha proteins prior to G protein heterotrimer formation, promoting their stability and activity. Also acts as a guanine nucleotide exchange factor (GEF) for G alpha proteins by stimulating exchange of bound GDP for free GTP. Able to facilitate synaptic transmission in the nervous system probably by activating G(q)-alpha (egl-30). Also able to activate the G(s)-alpha in synaptic signaling network. Plays a key role in asymmetric spindle positioning, a step for asymmetric cell division that generates cell diversity during development by activating G(i)-alpha protein goa-1 and gpa-16 independently of G-protein coupled receptors. While it acts as a GEF for goa-1, it has no GEF activity toward gpa-16. In addition to its GEF activity, it is required for cortical subcellular localization of G-alpha proteins such as gpa-16. Also required for the interaction of goa-1 and gpr-1/2, suggesting that it may act by generating G-alpha proteins free from G-beta-gamma subunits, enabling gpr-1/2 to mediate asymmetric cell division. This Caenorhabditis briggsae protein is Chaperone ric-8 (ric-8).